A 373-amino-acid polypeptide reads, in one-letter code: Dual-specificity RNA methyltransferase RlmN (373 aa).

Residue Glu94 is the Proton acceptor of the active site. The 240-residue stretch at 100-339 folds into the Radical SAM core domain; that stretch reads EDDRATLCVS…VIVRKTRGDD (240 aa). A disulfide bond links Cys107 and Cys344. [4Fe-4S] cluster contacts are provided by Cys114, Cys118, and Cys121. S-adenosyl-L-methionine-binding positions include 168-169, Ser200, 222-224, and Asn301; these read GE and SIH. Cys344 (S-methylcysteine intermediate) is an active-site residue.

This sequence belongs to the radical SAM superfamily. RlmN family. [4Fe-4S] cluster is required as a cofactor.

It localises to the cytoplasm. It catalyses the reaction adenosine(2503) in 23S rRNA + 2 reduced [2Fe-2S]-[ferredoxin] + 2 S-adenosyl-L-methionine = 2-methyladenosine(2503) in 23S rRNA + 5'-deoxyadenosine + L-methionine + 2 oxidized [2Fe-2S]-[ferredoxin] + S-adenosyl-L-homocysteine. The enzyme catalyses adenosine(37) in tRNA + 2 reduced [2Fe-2S]-[ferredoxin] + 2 S-adenosyl-L-methionine = 2-methyladenosine(37) in tRNA + 5'-deoxyadenosine + L-methionine + 2 oxidized [2Fe-2S]-[ferredoxin] + S-adenosyl-L-homocysteine. Specifically methylates position 2 of adenine 2503 in 23S rRNA and position 2 of adenine 37 in tRNAs. m2A2503 modification seems to play a crucial role in the proofreading step occurring at the peptidyl transferase center and thus would serve to optimize ribosomal fidelity. The sequence is that of Dual-specificity RNA methyltransferase RlmN from Shewanella pealeana (strain ATCC 700345 / ANG-SQ1).